The chain runs to 360 residues: UPF0283 membrane protein Asuc_0957 (360 aa).

3 consecutive transmembrane segments (helical) span residues 74–94 (VIAVAVLFLGATVAQSVQWLI), 102–122 (WIYFAFAVVGCSVVGLGLSAL), and 215–235 (AVENGIVVAISPLAIVDMLFL).

The protein belongs to the UPF0283 family.

Its subcellular location is the cell inner membrane. The polypeptide is UPF0283 membrane protein Asuc_0957 (Actinobacillus succinogenes (strain ATCC 55618 / DSM 22257 / CCUG 43843 / 130Z)).